The sequence spans 487 residues: Chromosomal replication initiator protein DnaA (487 aa).

The domain I, interacts with DnaA modulators stretch occupies residues 1 to 92; sequence MTIKGGVVSQ…SELWTANDAT (92 aa). The interval 92–144 is domain II; sequence TGRRLDLKSRLEFESVGGAGYEAKAEPIEIVLPVSSDVPALAPTNGSKPSPVQ. Positions 145-367 are domain III, AAA+ region; sequence GLQERFTFDT…GALNTLSARA (223 aa). Glycine 189, glycine 191, lysine 192, and threonine 193 together coordinate ATP. Positions 368–487 are domain IV, binds dsDNA; the sequence is GEGVSRLTLE…LETITRKLRG (120 aa).

Belongs to the DnaA family. In terms of assembly, oligomerizes as a right-handed, spiral filament on DNA at oriC.

It is found in the cytoplasm. Plays an essential role in the initiation and regulation of chromosomal replication. ATP-DnaA binds to the origin of replication (oriC) to initiate formation of the DNA replication initiation complex once per cell cycle. Binds the DnaA box (a 9 base pair repeat at the origin) and separates the double-stranded (ds)DNA. Forms a right-handed helical filament on oriC DNA; dsDNA binds to the exterior of the filament while single-stranded (ss)DNA is stabiized in the filament's interior. The ATP-DnaA-oriC complex binds and stabilizes one strand of the AT-rich DNA unwinding element (DUE), permitting loading of DNA polymerase. After initiation quickly degrades to an ADP-DnaA complex that is not apt for DNA replication. Binds acidic phospholipids. This is Chromosomal replication initiator protein DnaA from Caulobacter sp. (strain K31).